A 313-amino-acid chain; its full sequence is Olfactory receptor 6E1 (313 aa).

Residue asparagine 3 is glycosylated (N-linked (GlcNAc...) asparagine). Transmembrane regions (helical) follow at residues 25–45 (IFLG…LIIF), 64–84 (FAML…TNII), 96–116 (FLQA…LAVM), 142–162 (LVFC…SIVF), 192–212 (LVEF…LAVT), 238–258 (TCSS…FMYV), and 271–291 (KVVA…IYTL). Cysteine 95 and cysteine 177 are oxidised to a cystine.

This sequence belongs to the G-protein coupled receptor 1 family.

The protein localises to the cell membrane. Odorant receptor. Activated by (-)-citronellal and to a lesser extent by (+)-citronellal. Not activated by carvone or limonene. In Mus musculus (Mouse), this protein is Olfactory receptor 6E1.